A 189-amino-acid polypeptide reads, in one-letter code: GTPase NRas (189 aa).

10 to 17 (GAGGVGKS) is a binding site for GTP. The Effector region motif lies at 32-40 (YDPTIEDSY). Residues 57–61 (DTAGQ) and 116–119 (NKCD) contribute to the GTP site. A hypervariable region region spans residues 166 to 185 (YRMKKLDSSEDNNQGCIRIP). Residue Cys181 is the site of S-palmitoyl cysteine attachment. Cys186 carries S-farnesyl cysteine lipidation. A propeptide spans 187–189 (KLM) (removed in mature form).

This sequence belongs to the small GTPase superfamily. Ras family. Post-translationally, palmitoylated by the ZDHHC9-GOLGA7 complex. Depalmitoylated by abhd17a, abhd17b and abhd17c. A continuous cycle of de- and re-palmitoylation regulates rapid exchange between plasma membrane and Golgi.

It localises to the cell membrane. The protein resides in the golgi apparatus membrane. The catalysed reaction is GTP + H2O = GDP + phosphate + H(+). With respect to regulation, alternates between an inactive form bound to GDP and an active form bound to GTP. Activated by a guanine nucleotide-exchange factor (GEF) and inactivated by a GTPase-activating protein (GAP). In terms of biological role, ras proteins bind GDP/GTP and possess intrinsic GTPase activity. This is GTPase NRas (nras) from Xenopus laevis (African clawed frog).